The sequence spans 126 residues: Holo-[acyl-carrier-protein] synthase (126 aa).

Positions 9 and 58 each coordinate Mg(2+).

Belongs to the P-Pant transferase superfamily. AcpS family. It depends on Mg(2+) as a cofactor.

The protein localises to the cytoplasm. It carries out the reaction apo-[ACP] + CoA = holo-[ACP] + adenosine 3',5'-bisphosphate + H(+). Its function is as follows. Transfers the 4'-phosphopantetheine moiety from coenzyme A to a Ser of acyl-carrier-protein. In Klebsiella pneumoniae subsp. pneumoniae (strain ATCC 700721 / MGH 78578), this protein is Holo-[acyl-carrier-protein] synthase.